The primary structure comprises 688 residues: Translation initiation factor IF-2 (688 aa).

The segment covering 50–62 has biased composition (basic and acidic residues); it reads LLSGKEKSEKTKE. The tract at residues 50–95 is disordered; the sequence is LLSGKEKSEKTKEEDDEIETTAKNPIKESINNKKSNKRDDKKEKVN. Over residues 72–82 the composition is skewed to low complexity; it reads KNPIKESINNK. Positions 86–95 are enriched in basic and acidic residues; that stretch reads KRDDKKEKVN. The tr-type G domain occupies 187–354; that stretch reads KRSPIITVMG…MILLSSEILE (168 aa). A G1 region spans residues 196-203; it reads GHVDHGKT. 196–203 provides a ligand contact to GTP; it reads GHVDHGKT. A G2 region spans residues 221-225; sequence GITQH. The segment at 242-245 is G3; it reads DTPG. GTP-binding positions include 242–246 and 296–299; these read DTPGH and NKID. A G4 region spans residues 296–299; the sequence is NKID. The tract at residues 332 to 334 is G5; the sequence is SAH.

This sequence belongs to the TRAFAC class translation factor GTPase superfamily. Classic translation factor GTPase family. IF-2 subfamily.

The protein localises to the cytoplasm. In terms of biological role, one of the essential components for the initiation of protein synthesis. Protects formylmethionyl-tRNA from spontaneous hydrolysis and promotes its binding to the 30S ribosomal subunits. Also involved in the hydrolysis of GTP during the formation of the 70S ribosomal complex. This chain is Translation initiation factor IF-2, found in Clostridium botulinum (strain 657 / Type Ba4).